Consider the following 549-residue polypeptide: MSADITETPAWQALSDHHAEIGDRHLTELFADDPARGTELALTVGDLYIDYSKHRVTRRTLDLLVDLARAAGLEERRDAMFAGEHINTSEDRAVLHTALRLPRDAKLVVDGQDVVADVHDVLDRMGDFTDRLRSGEWTGATGERITTVVNIGIGGSDLGPVMVYDALRHYADAGISARFVSNVDPADLVAKLDGLEPAKTLFIVASKTFSTLETLTNATAARRWLTDALGDAAVAKHSSRCPPTRSWSTKFGINTDNMFGFWDWVGGRYSVDSAIGLSVMAVIGKERFAEFLAGFHIVDEHFRTAPLHQNAPALLGLIGLWYSNFFGAQSRAVLPYSNDLSRFAAYLQQLTMESNGKSVRADGTPVSTDTGEIFWGEPGTNGQHAFYQLLHQGTRLVPADFIGFSQPTDDLPTADGTGSMHDLLMSNFFAQTQVLAFGKTADAIASEGTPADVVPHKVMPGNRPTTSILATKLTPSVVGQLIALYEHQVFTEGVIWGIDSFDQWGVELGKTQAKALLPVLTGDKSPAAQSDTSTDALVRRYRTERGRPA.

The active-site Proton donor is glutamate 353. Catalysis depends on residues histidine 384 and lysine 510.

The protein belongs to the GPI family.

The protein resides in the cytoplasm. The catalysed reaction is alpha-D-glucose 6-phosphate = beta-D-fructose 6-phosphate. It participates in carbohydrate biosynthesis; gluconeogenesis. Its pathway is carbohydrate degradation; glycolysis; D-glyceraldehyde 3-phosphate and glycerone phosphate from D-glucose: step 2/4. Its function is as follows. Catalyzes the reversible isomerization of glucose-6-phosphate to fructose-6-phosphate. The sequence is that of Glucose-6-phosphate isomerase from Mycolicibacterium smegmatis (Mycobacterium smegmatis).